A 257-amino-acid polypeptide reads, in one-letter code: UPF0246 protein BF3795 (257 aa).

Belongs to the UPF0246 family.

The sequence is that of UPF0246 protein BF3795 from Bacteroides fragilis (strain ATCC 25285 / DSM 2151 / CCUG 4856 / JCM 11019 / LMG 10263 / NCTC 9343 / Onslow / VPI 2553 / EN-2).